We begin with the raw amino-acid sequence, 202 residues long: MSRYRGPRVKIIRRPGVSPGLTSKTLKSKSNYIDRSTSNKKVSQYRVRLEEKQKLRFHYGLTERQLLKYVRIARKAKGSTGQVLLQLLEMRLDNTIFRLGMAPTIPGARQLVNHGHISMNNNIIDIPSYNREPGDIITIRNKLESRSMISKNINLFQKLKMPSHLSFDLTGLQGSVNQMVNREWVNLKINELLVVEYYSRQV.

The segment at arginine 13–threonine 37 is disordered. A compositionally biased stretch (polar residues) spans glycine 20–threonine 37. The 64-residue stretch at methionine 90–isoleucine 153 folds into the S4 RNA-binding domain.

The protein belongs to the universal ribosomal protein uS4 family. As to quaternary structure, part of the 30S ribosomal subunit. Contacts protein S5. The interaction surface between S4 and S5 is involved in control of translational fidelity.

Its subcellular location is the plastid. The protein localises to the chloroplast. Its function is as follows. One of the primary rRNA binding proteins, it binds directly to 16S rRNA where it nucleates assembly of the body of the 30S subunit. In terms of biological role, with S5 and S12 plays an important role in translational accuracy. This Takakia lepidozioides (Moss) protein is Small ribosomal subunit protein uS4c (rps4).